A 734-amino-acid chain; its full sequence is Adhesion G protein-coupled receptor E5 (734 aa).

The N-terminal stretch at 1–26 (MGGPHGGPFLLFHVLCFLLTLSEVGS) is a signal peptide. Residues 27 to 449 (QNSKACALPC…VEDPKLALIT (423 aa)) are Extracellular-facing. The EGF-like 1 domain occupies 28 to 70 (NSKACALPCPPNSSCVNGTACRCAPGFISFSGEIFTDPLESCD). 9 disulfides stabilise this stretch: Cys32/Cys42, Cys36/Cys48, Cys50/Cys69, Cys75/Cys89, Cys83/Cys98, Cys100/Cys121, Cys127/Cys140, Cys134/Cys149, and Cys151/Cys170. N-linked (GlcNAc...) asparagine glycans are attached at residues Asn39 and Asn44. Residues 71–122 (DINECGPPSPVDCGSSADCQNTEGGYYCTCSPGYEPVSGAMIFRNESENTCR) form the EGF-like 2; calcium-binding domain. N-linked (GlcNAc...) asparagine glycosylation is found at Asn115 and Asn136. Residues 123-171 (DVDECSSGQHQCHNSTVCFNTVGSYTCHCREGWEPKHGLKNKQKDTICK) enclose the EGF-like 3; calcium-binding domain. One can recognise a GAIN-B domain in the interval 265–441 (TYRSLDNTEL…AILMAHYDVE (177 aa)). N-linked (GlcNAc...) asparagine glycans are attached at residues Asn285, Asn327, Asn372, Asn403, and Asn418. 2 cysteine pairs are disulfide-bonded: Cys393–Cys423 and Cys411–Cys425. Positions 393 to 441 (CAFWKKDSNGNGSWATTGCWKMGRGNGSITCQCSHLSSFAILMAHYDVE) are GPS. The helical transmembrane segment at 450–470 (KVGLALSLACLLLCILTFLLV) threads the bilayer. Over 471–478 (RPIQGSRT) the chain is Cytoplasmic. A helical membrane pass occupies residues 479-499 (TVHLHLCICLFVGSAIFLAGI). The Extracellular segment spans residues 500-519 (ENEGGEVGTRCRLVAVLLHY). The helical transmembrane segment at 520 to 540 (CFLAAFCWMSLEGVELYFLVV) threads the bilayer. The Cytoplasmic portion of the chain corresponds to 541 to 550 (RVFQGQGMRK). A helical membrane pass occupies residues 551–571 (LWLCLIGYGVPLIIVGISAGA). Residues 572-593 (YSKGYGREKFCWLNFEGGFLWS) are Extracellular-facing. The chain crosses the membrane as a helical span at residues 594–614 (FVGPVTFIVLGNAIIFVITVW). Over 615–637 (KLTQKFSEINPDIKKLKKARVLT) the chain is Cytoplasmic. A helical transmembrane segment spans residues 638–658 (ITAIAQLFVLGCTWVFGLLLF). Over 659–662 (NPES) the chain is Extracellular. Residues 663-683 (WVLSYIFSILNCLQGFFLFVL) traverse the membrane as a helical segment. Residues 684-734 (YCLLNKKVREEYRKWACMVAGNKYSEFATTTSGSGSSHNQTQALRPSESGM) are Cytoplasmic-facing. The tract at residues 712–734 (TTTSGSGSSHNQTQALRPSESGM) is disordered. Thr713 bears the Phosphothreonine mark. Ser715 carries the post-translational modification Phosphoserine. Thr724 is modified (phosphothreonine). Ser730 and Ser732 each carry phosphoserine.

Belongs to the G-protein coupled receptor 2 family. LN-TM7 subfamily. As to quaternary structure, forms a heterodimer, consisting of a large extracellular region (alpha subunit) non-covalently linked to a seven-transmembrane moiety (beta subunit). Interacts with complement decay-accelerating factor (DAF) and with chondroitin sulfate. Proteolytically cleaved into 2 subunits, an extracellular alpha subunit and a seven-transmembrane subunit.

It localises to the cell membrane. Its subcellular location is the secreted. The protein localises to the extracellular space. Functionally, receptor potentially involved in both adhesion and signaling processes early after leukocyte activation. Plays an essential role in leukocyte migration. The sequence is that of Adhesion G protein-coupled receptor E5 from Bos taurus (Bovine).